Reading from the N-terminus, the 871-residue chain is Bifunctional cordycepin biosynthesis cluster protein 3 (871 aa).

Its pathway is secondary metabolite biosynthesis. Functionally, nucleoside/nucleotide kinase; part of the gene cluster that mediates the biosynthesis of cordycepin (COR) and pentostatin (PTN), two adenosine analogs with related bioactivity profiles as both mimic adenosine and can inhibit some of the processes that are adenosine dependent. Within the pathway, cns3 catalyzes both the first step of cordycepin biosynthesis by phosphorylating adenosine into 3'-AMP via its kinase activity and the conversion of adenosine into pentostatin via its ATP phosphoribosyltransferase activity. The first step of cordycepin biosynthesis involves hydroxyl phosphorylation of the 3'-OH position on adenosine to produce adenosine-3'-monophosphate (3'-AMP), catalyzed by kinase activity of cns3. Next, 3'-AMP is dephosphorylated to 2'-carbonyl-3'-deoxyadenosine (2'-C-3'-dA) by cns2, which is finally converted to cordycepin (3'-deoxyadenosine) by the oxidoreductase cns1. The protein is Bifunctional cordycepin biosynthesis cluster protein 3 of Cordyceps militaris (strain CM01) (Caterpillar fungus).